A 599-amino-acid polypeptide reads, in one-letter code: Laccase-15 (599 aa).

The first 29 residues, 1 to 29, serve as a signal peptide directing secretion; sequence MKRCQSSRPTAAVAAVVAAVSMIIVLVSG. Plastocyanin-like domains lie at 46-162 and 173-328; these read VVSQ…PRHG and REVP…YSSN. N-linked (GlcNAc...) asparagine glycans are attached at residues Asn51 and Asn92. Positions 96 and 98 each coordinate Cu cation. Asn124 carries N-linked (GlcNAc...) asparagine glycosylation. His141 and His143 together coordinate Cu cation. N-linked (GlcNAc...) asparagine glycosylation is found at Asn193, Asn217, Asn331, Asn355, Asn412, and Asn454. A Plastocyanin-like 3 domain is found at 444-586; sequence ELAERPPRAY…AAVFIVEDGP (143 aa). The Cu cation site is built by Asn503, His506, His508, His565, Cys566, His567, His571, and Met576.

It belongs to the multicopper oxidase family. The cofactor is Cu cation.

The protein resides in the secreted. It localises to the extracellular space. The protein localises to the apoplast. It carries out the reaction 4 hydroquinone + O2 = 4 benzosemiquinone + 2 H2O. Its function is as follows. Lignin degradation and detoxification of lignin-derived products. The sequence is that of Laccase-15 (LAC15) from Oryza sativa subsp. japonica (Rice).